Here is a 545-residue protein sequence, read N- to C-terminus: 1,3-beta-glucanosyltransferase ARB_07487 (545 aa).

Residues 1–19 (MKFSSLAAATALVAGSVVA) form the signal peptide. Residues Asn-51 and Asn-69 are each glycosylated (N-linked (GlcNAc...) asparagine). Residues Cys-88 and Cys-117 are joined by a disulfide bond. Residues Tyr-106, 133-141 (SEPSTSIIR), Asn-174, and Glu-175 contribute to the (1,3-beta-D-glucosyl)n site. Glu-175 serves as the catalytic Proton donor. N-linked (GlcNAc...) asparagine glycosylation is present at Asn-179. Positions 216 and 221 each coordinate (1,3-beta-D-glucosyl)n. Intrachain disulfides connect Cys-230-Cys-363, Cys-248-Cys-279, Cys-384-Cys-437, Cys-393-Cys-464, and Cys-412-Cys-419. Glu-276 serves as the catalytic Nucleophile. Tyr-308 provides a ligand contact to (1,3-beta-D-glucosyl)n. The interval 493-513 (GTGSVTSAPGSGGNKPDQGAA) is disordered. A lipid anchor (GPI-anchor amidated alanine) is attached at Ala-512. Residues 513 to 545 (ASTISAPSVNLGIVKLGAYIFCAVLAGAGMILI) constitute a propeptide, removed in mature form.

The protein belongs to the glycosyl hydrolase 72 family. In terms of processing, the GPI-anchor is attached to the protein in the endoplasmic reticulum and serves to target the protein to the cell surface. There, the glucosamine-inositol phospholipid moiety is cleaved off and the GPI-modified mannoprotein is covalently attached via its lipidless GPI glycan remnant to the 1,6-beta-glucan of the outer cell wall layer.

The protein localises to the secreted. It localises to the cell membrane. It is found in the cell wall. Its function is as follows. Splits internally a 1,3-beta-glucan molecule and transfers the newly generated reducing end (the donor) to the non-reducing end of another 1,3-beta-glucan molecule (the acceptor) forming a 1,3-beta linkage, resulting in the elongation of 1,3-beta-glucan chains in the cell wall. Involved in cell wall biosynthesis and morphogenesis. The chain is 1,3-beta-glucanosyltransferase ARB_07487 from Arthroderma benhamiae (strain ATCC MYA-4681 / CBS 112371) (Trichophyton mentagrophytes).